A 713-amino-acid polypeptide reads, in one-letter code: Transcription activator of gluconeogenesis CPC735_053490 (713 aa).

The segment at 1–70 (MTANAINGPV…NAKDPLRPRR (70 aa)) is disordered. Residues 19–56 (GDNNKSADTTMADQGTRPESQPQGQNNGAKPQNGQTKP) show a composition bias toward polar residues. A DNA-binding region (zn(2)-C6 fungal-type) is located at residues 77 to 105 (CFACQRAHLTCGDERPCQRCIKRGIQNAC). Residues 145-159 (PLTRNGSNSKTNFYP) are compositionally biased toward polar residues. Disordered regions lie at residues 145-229 (PLTR…ASGQ), 274-318 (GAGE…LFGD), 541-564 (GGSS…GMDI), and 623-665 (GTTS…QRKW). The segment covering 160 to 171 (QQQSSFNNFYQN) has biased composition (low complexity). The span at 191–212 (FPSQSPVSPTFNMTANPAASGN) shows a compositional bias: polar residues. Low complexity predominate over residues 213–229 (QGLPSSLSASNSNASGQ). Polar residues-rich tracts occupy residues 295 to 312 (SGTY…TGQP), 541 to 558 (GGSS…SFTP), and 649 to 659 (GASNGQSQHSL).

This sequence belongs to the ERT1/acuK family.

It is found in the nucleus. Its function is as follows. Transcription factor which regulates nonfermentable carbon utilization. Activator of gluconeogenetic genes. The polypeptide is Transcription activator of gluconeogenesis CPC735_053490 (Coccidioides posadasii (strain C735) (Valley fever fungus)).